Here is a 293-residue protein sequence, read N- to C-terminus: ATP synthase gamma chain (293 aa).

This sequence belongs to the ATPase gamma chain family. F-type ATPases have 2 components, CF(1) - the catalytic core - and CF(0) - the membrane proton channel. CF(1) has five subunits: alpha(3), beta(3), gamma(1), delta(1), epsilon(1). CF(0) has three main subunits: a, b and c.

The protein localises to the cell inner membrane. Functionally, produces ATP from ADP in the presence of a proton gradient across the membrane. The gamma chain is believed to be important in regulating ATPase activity and the flow of protons through the CF(0) complex. This chain is ATP synthase gamma chain, found in Leptothrix cholodnii (strain ATCC 51168 / LMG 8142 / SP-6) (Leptothrix discophora (strain SP-6)).